Here is an 86-residue protein sequence, read N- to C-terminus: High affinity immunoglobulin epsilon receptor subunit gamma (86 aa).

A signal peptide spans 1-18 (MIPAVILFLLLLVEEAAA). The Extracellular portion of the chain corresponds to 19–23 (LGEPQ). Residues 24 to 44 (LCYILDAILFLYGIVLTLLYC) form a helical membrane-spanning segment. Residues 45 to 86 (RLKIQVRKADIASREKSDAVYTGLNTRNQETYETLKHEKPPQ) are Cytoplasmic-facing. In terms of domain architecture, ITAM spans 54–82 (DIASREKSDAVYTGLNTRNQETYETLKHE). A phosphotyrosine mark is found at tyrosine 65 and tyrosine 76. Threonine 78 carries the post-translational modification Phosphothreonine.

This sequence belongs to the CD3Z/FCER1G family. In terms of assembly, igE Fc receptor is a tetramer of an alpha chain, a beta chain, and two disulfide linked gamma chains. Associates with FCGR1A to form a functional receptor complex. The signaling subunit of immunoglobulin gamma (IgG) Fc receptor complex. As a homodimer or a heterodimer of CD247 and FCER1G, associates with the ligand binding subunit FCGR3A to form a functional receptor complex. Associates with CLEC6A. Interacts with CLEC4E. Interacts (via ITAM domain) with SYK (via SH2 domains); activates SYK, enabling integrin-mediated activation of neutrophils and macrophages. Interacts with common beta chain of interleukin 3 receptor CSF2RB and recruits SYK in response to IL3 stimulation; this interaction is direct. Interacts with CD300LH; the interaction may be indirect. Interacts with CD300LD. Interacts with TARM1. In terms of tissue distribution, expressed in leukocytes and pinealocytes. Expression in the pineal gland does not undergo circadian variations.

The protein resides in the cell membrane. Functionally, adapter protein containing an immunoreceptor tyrosine-based activation motif (ITAM) that transduces activation signals from various immunoreceptors. As a component of the high-affinity immunoglobulin E (IgE) receptor, mediates allergic inflammatory signaling in mast cells. As a constitutive component of interleukin-3 receptor complex, selectively mediates interleukin 4/IL4 production by basophils priming T-cells toward effector T-helper 2 subset. Associates with pattern recognition receptors CLEC4D and CLEC4E to form a functional signaling complex in myeloid cells. Binding of mycobacterial trehalose 6,6'-dimycolate (TDM) to this receptor complex leads to phosphorylation of ITAM, triggering activation of SYK, CARD9 and NF-kappa-B, consequently driving maturation of antigen-presenting cells and shaping antigen-specific priming of T-cells toward effector T-helper 1 and T-helper 17 cell subtypes. May function cooperatively with other activating receptors. Functionally linked to integrin beta-2/ITGB2-mediated neutrophil activation. Also involved in integrin alpha-2/ITGA2-mediated platelet activation. This Rattus norvegicus (Rat) protein is High affinity immunoglobulin epsilon receptor subunit gamma (Fcer1g).